The chain runs to 407 residues: Phospholipase A1-II 7 (407 aa).

Ser-230 functions as the Acyl-ester intermediate in the catalytic mechanism. Residues Ser-230, Asp-299, and His-336 each act as charge relay system in the active site.

It belongs to the AB hydrolase superfamily. Lipase family.

It is found in the cytoplasm. In terms of biological role, acylhydrolase that catalyzes the hydrolysis of phospholipids at the sn-1 position. This Oryza sativa subsp. indica (Rice) protein is Phospholipase A1-II 7.